Reading from the N-terminus, the 416-residue chain is Phosphoglycerate kinase (416 aa).

(2R)-3-phosphoglycerate-binding residues include V22, D23, F24, N25, Q37, R38, S61, H62, G64, R65, L120, R121, H168, and R169. Residue G212 participates in ADP binding. G212 is a CDP binding site. A213 and K214 together coordinate AMP. Position 213 (A213) interacts with ATP. A213 is a binding site for Mg(2+). D217 is a CDP binding site. Mg(2+) is bound at residue D217. K218 contacts AMP. K218 provides a ligand contact to ATP. G236 contacts ADP. G236 lines the CDP pocket. 2 residues coordinate AMP: G237 and G311. Residues G237 and G311 each contribute to the ATP site. 2 residues coordinate CDP: G336 and F341. F341 provides a ligand contact to ADP. Residue E342 participates in AMP binding. Positions 342, 373, and 374 each coordinate ATP. D373 is a Mg(2+) binding site.

This sequence belongs to the phosphoglycerate kinase family. In terms of assembly, monomer. Mg(2+) is required as a cofactor. Expressed in all cells of the worm (at protein level), higher expression in the cells associated with the tubercles (tegumental modifications), the muscle and along the tegument.

The enzyme catalyses (2R)-3-phosphoglycerate + ATP = (2R)-3-phospho-glyceroyl phosphate + ADP. Its pathway is carbohydrate degradation; glycolysis; pyruvate from D-glyceraldehyde 3-phosphate: step 2/5. Functionally, involved in the seventh step in glycolysis. Catalyzes the conversion of 1,3-bisphosphoglycerate ((2R)-3-phospho-glyceroyl phosphate) to 3-phosphoglycerate ((2R)-3-phosphoglycerate) and results in the formation of ATP. Associated with the tegument to provide the energy needed for the tegumental repair resulting from immune damage. This chain is Phosphoglycerate kinase (PGK), found in Schistosoma mansoni (Blood fluke).